Consider the following 1771-residue polypeptide: Myosin-H heavy chain (1771 aa).

The Myosin N-terminal SH3-like domain occupies 7–57 (CGKEKVWVPNPEKGWINGDLIKEIPGEGWLVRDENGKEIKIEKDELRMQNP). Residues 61–840 (EGIDDMTSLS…IIANLELLRS (780 aa)) form the Myosin motor domain. 154–161 (GESGAGKT) contacts ATP. Residues 690 to 712 (LNSLMTTINSTNPHYIRCIKPNT) are actin-binding. IQ domains lie at 843 to 872 (MINS…SSIY), 866 to 895 (TKHS…ENSA), and 940 to 969 (RIKK…EAKS). Disordered regions lie at residues 1070-1176 (EKQH…NNVD), 1218-1282 (VKKS…PINM), and 1312-1343 (LNNG…KHIQ). The span at 1077–1111 (YKNNEVVGNTSFEGSTTTNNGVTSPPKSSPASPIR) shows a compositional bias: polar residues. Residues 1112-1139 (NSINSNSDTTISGSSDDSIDNTDSLILS) are compositionally biased toward low complexity. Residues 1143 to 1153 (HKGEDRKRNHE) show a composition bias toward basic and acidic residues. Residues 1180–1224 (RRQFNELEKEYKELKQMDETHKQYIESLKLQITQLEEKVKKSSSH) are a coiled coil. A compositionally biased stretch (low complexity) spans 1253–1281 (NSSSHHQQQQQQHNISPSNSITSTTSPIN). Residues 1427–1695 (TGVLDPIETN…LTSLMDSPKY (269 aa)) enclose the Dilute domain.

The protein belongs to the TRAFAC class myosin-kinesin ATPase superfamily. Myosin family. In terms of assembly, myosin I heavy chain is single-headed. Dimer of a heavy and a light chain. Inability to self-assemble into filaments.

In terms of biological role, myosin is a protein that binds to actin and has ATPase activity that is activated by actin. This is Myosin-H heavy chain (myoH) from Dictyostelium discoideum (Social amoeba).